The chain runs to 342 residues: AA9 family lytic polysaccharide monooxygenase AA9-X282 (342 aa).

Residues 1 to 18 form the signal peptide; it reads MKSFASLLFLAATAAAHA. Residue histidine 17 participates in Cu(2+) binding. 2 positions are modified to phosphothreonine: threonine 19 and threonine 57. Serine 59 carries the phosphoserine modification. A disulfide bridge links cysteine 63 with cysteine 181. Residue histidine 93 coordinates Cu(2+). Positions 167 and 176 each coordinate O2. Cu(2+) is bound at residue tyrosine 178. N-linked (GlcNAc...) asparagine glycosylation occurs at asparagine 189. An X282 extension region spans residues 233–263; that stretch reads SPATVANTPYPTTATWNTALQPTTVPTVTPP. The disordered stretch occupies residues 281-302; it reads VTSQPPVPPTTQQPPVVTPTAP. Positions 285 to 302 are enriched in pro residues; the sequence is PPVPPTTQQPPVVTPTAP. Positions 306–342 constitute a CBM1 domain; that stretch reads PLQTQYGQCGGQGWNGPTQCQPPYTCTASNQWYHQCL.

This sequence belongs to the polysaccharide monooxygenase AA9 family. It depends on Cu(2+) as a cofactor.

Its subcellular location is the secreted. The catalysed reaction is [(1-&gt;4)-beta-D-glucosyl]n+m + reduced acceptor + O2 = 4-dehydro-beta-D-glucosyl-[(1-&gt;4)-beta-D-glucosyl]n-1 + [(1-&gt;4)-beta-D-glucosyl]m + acceptor + H2O.. Functionally, lytic polysaccharide monooxygenase (LPMO) that depolymerizes crystalline and amorphous polysaccharides via the oxidation of scissile alpha- or beta-(1-4)-glycosidic bonds, yielding C1 oxidation products. Catalysis by LPMOs requires the reduction of the active-site copper from Cu(II) to Cu(I) by a reducing agent and H(2)O(2) or O(2) as a cosubstrate. Shows only weak binding properties to cellulose, and low cellulolytic oxidative activity which questions the involvement of X282 extension-containing AA9 proteins in the degradation of plant cell wall and opens new avenues as to the divergence of function of some AA9 members. The polypeptide is AA9 family lytic polysaccharide monooxygenase AA9-X282 (Coprinopsis cinerea (strain Okayama-7 / 130 / ATCC MYA-4618 / FGSC 9003) (Inky cap fungus)).